Consider the following 185-residue polypeptide: Ribosome-recycling factor (185 aa).

This sequence belongs to the RRF family.

It is found in the cytoplasm. Responsible for the release of ribosomes from messenger RNA at the termination of protein biosynthesis. May increase the efficiency of translation by recycling ribosomes from one round of translation to another. The polypeptide is Ribosome-recycling factor (Dichelobacter nodosus (strain VCS1703A)).